A 339-amino-acid chain; its full sequence is Dihydroorotate dehydrogenase (quinone) (339 aa).

Residues 62 to 66 (AGLDK) and threonine 86 each bind FMN. Lysine 66 lines the substrate pocket. Residue 111 to 115 (NRMGF) coordinates substrate. 2 residues coordinate FMN: asparagine 139 and asparagine 172. Asparagine 172 is a binding site for substrate. Catalysis depends on serine 175, which acts as the Nucleophile. Asparagine 177 is a binding site for substrate. Positions 217 and 245 each coordinate FMN. Substrate is bound at residue 246–247 (NT). Residues glycine 268, glycine 297, and 318–319 (YS) each bind FMN.

This sequence belongs to the dihydroorotate dehydrogenase family. Type 2 subfamily. In terms of assembly, monomer. FMN is required as a cofactor.

The protein localises to the cell membrane. The catalysed reaction is (S)-dihydroorotate + a quinone = orotate + a quinol. Its pathway is pyrimidine metabolism; UMP biosynthesis via de novo pathway; orotate from (S)-dihydroorotate (quinone route): step 1/1. In terms of biological role, catalyzes the conversion of dihydroorotate to orotate with quinone as electron acceptor. The polypeptide is Dihydroorotate dehydrogenase (quinone) (Shewanella frigidimarina (strain NCIMB 400)).